The chain runs to 709 residues: ATP-binding cassette sub-family F member 3 (709 aa).

An N-acetylalanine modification is found at Ala2. The segment covering 129–143 (RLKAKQEKRSEKETL) has biased composition (basic and acidic residues). The disordered stretch occupies residues 129 to 171 (RLKAKQEKRSEKETLKTSSPLVLEEASASQAGSRKESRLESSG). Phosphoserine occurs at positions 155, 157, and 161. A compositionally biased stretch (basic and acidic residues) spans 161–171 (SRKESRLESSG). ABC transporter domains lie at 178–424 (VRIE…LNQQ) and 492–707 (LQLD…RREG). ATP is bound at residue 210–217 (GRNGLGKT). Ser283 carries the phosphoserine modification. 525 to 532 (GENGAGKS) contributes to the ATP binding site.

This sequence belongs to the ABC transporter superfamily. ABCF family. EF3 subfamily.

Functionally, displays an antiviral effect against flaviviruses such as west Nile virus (WNV) in the presence of OAS1B. The sequence is that of ATP-binding cassette sub-family F member 3 (Abcf3) from Rattus norvegicus (Rat).